Consider the following 413-residue polypeptide: N-acylneuraminate cytidylyltransferase (413 aa).

The protein belongs to the CMP-NeuNAc synthase family. It depends on Mg(2+) as a cofactor. Mn(2+) is required as a cofactor.

The protein resides in the cytoplasm. It catalyses the reaction an N-acylneuraminate + CTP = a CMP-N-acyl-beta-neuraminate + diphosphate. Functionally, catalyzes the formation of CMP-N-acetylneuraminic acid (CMP-NeuNAc), which is essential for the formation of the capsule. The chain is N-acylneuraminate cytidylyltransferase (neuA) from Streptococcus agalactiae serotype Ia (strain ATCC 27591 / A909 / CDC SS700).